The primary structure comprises 254 residues: Putative epimerase LsrE (254 aa).

The helical transmembrane segment at 14–34 (VALLASYPLSVGILAGQWIAL) threads the bilayer. A divalent metal cation-binding residues include H50, D52, and H81. Residue D52 is the Proton acceptor of the active site. Substrate-binding positions include H81, 166–169 (GYGS), 199–201 (DGS), and 221–222 (GS). D199 contributes to the a divalent metal cation binding site. D199 acts as the Proton donor in catalysis.

The protein belongs to the ribulose-phosphate 3-epimerase family. It depends on a divalent metal cation as a cofactor.

The protein localises to the cell membrane. This is Putative epimerase LsrE (lsrE) from Salmonella choleraesuis (strain SC-B67).